A 454-amino-acid polypeptide reads, in one-letter code: Prenyltransferase nscD (454 aa).

It belongs to the tryptophan dimethylallyltransferase family.

The protein operates within secondary metabolite biosynthesis. Functionally, prenyltransferase; part of the gene cluster that mediates the biosynthesis of neosartoricin, a prenylated anthracenone that exhibits T-cell antiproliferative activity, suggestive of a physiological role as an immunosuppressive agent. The non-reducing polyketide synthase nscA probably synthesizes and cyclizes the decaketide backbone. The hydrolase nscB then mediates the product release through hydrolysis followed by spontaneous decarboxylation. The prenyltransferase nscD catalyzes the addition of the dimethylallyl group to the aromatic C5. The FAD-dependent monooxygenase nscC is then responsible for the stereospecific hydroxylation at C2. There is no gene encoding O-acetyltransferase in the nsc gene cluster; thus, the last step of 2-O-acetylation leading to neosartoricin may be catalyzed by an unidentified O-acetyltransferase. This Neosartorya fischeri (strain ATCC 1020 / DSM 3700 / CBS 544.65 / FGSC A1164 / JCM 1740 / NRRL 181 / WB 181) (Aspergillus fischerianus) protein is Prenyltransferase nscD.